We begin with the raw amino-acid sequence, 520 residues long: BBSome complex member BBS4 (520 aa).

The interval 1–26 is disordered; the sequence is MAEVKLGMKTQVPASVESQKPRSKKA. Residues 1–66 are required for localization to centrosomes; sequence MAEVKLGMKT…EQLQETQGLC (66 aa). TPR repeat units follow at residues 67-100, 102-134, 135-167, 168-201, 203-235, 237-269, 270-303, 304-337, 339-371, and 373-408; these read EYAIYVQALIFRLEGNIQESLELFQTCAVLSPQC, DNLKQVARSLFLLGKHKAATEVYNEAAKLNQKD, WEICHNLGVCYTYLKQFNKAQDQLHSALQLNKH, DLTYIMLGKIHLLQGDLDKAIEIYKKAVEFSPEN, ELLTTLGLLYLQLGVYQKAFEHLGNALTYDPAN, KAILAAGSMMQTHGDFDVALTKYRVVACAIPES, PPLWNNIGMCFFGKKKYVAAISCLKRANYLAPFD, WKILYNLGLVHLTMQQYASAFHFLSAAINFQPKM, ELYMLLAVALTNLEDIENARRAYVEAVRLDKCN, and LVNLNYAVLLYNQGEKKSALAQYQEMEKKVNFLKDN. The tract at residues 101–337 is interaction with PCM1; that stretch reads ADNLKQVARS…SAAINFQPKM (237 aa). Residues 338 to 520 form a required for localization to centrosomes region; it reads GELYMLLAVA…TEASEQKKEK (183 aa). The interval 488 to 520 is disordered; it reads AQLPKPPSLPLEPEPEPTVEASPTEASEQKKEK.

It belongs to the BBS4 family. As to quaternary structure, part of BBSome complex, that contains BBS1, BBS2, BBS4, BBS5, BBS7, BBS8/TTC8, BBS9 and BBIP10. Interacts with PCM1 and DCTN1. Interacts with DC28B. Interacts with ALDOB and C2CD3. Interacts with PKD1. Interacts with CEP290. Interacts with DLEC1. In terms of tissue distribution, expressed in the hippocampus and dentate gyrus, the columnar epithelial cells of bronchioles, the olfactory epithelium and the inner segment and outer nuclear layer of the retina. Expressed in testis.

It is found in the cytoplasm. It localises to the cytoskeleton. The protein localises to the microtubule organizing center. Its subcellular location is the centrosome. The protein resides in the cell projection. It is found in the cilium membrane. It localises to the centriolar satellite. The protein localises to the cilium. Its subcellular location is the flagellum. The BBSome complex is thought to function as a coat complex required for sorting of specific membrane proteins to the primary cilia. The BBSome complex is required for ciliogenesis but is dispensable for centriolar satellite function. This ciliogenic function is mediated in part by the Rab8 GDP/GTP exchange factor, which localizes to the basal body and contacts the BBSome. Rab8(GTP) enters the primary cilium and promotes extension of the ciliary membrane. Firstly the BBSome associates with the ciliary membrane and binds to RAB3IP/Rabin8, the guanosyl exchange factor (GEF) for Rab8 and then the Rab8-GTP localizes to the cilium and promotes docking and fusion of carrier vesicles to the base of the ciliary membrane. The BBSome complex, together with the LTZL1, controls SMO ciliary trafficking and contributes to the sonic hedgehog (SHH) pathway regulation. Required for proper BBSome complex assembly and its ciliary localization. Required for microtubule anchoring at the centrosome but not for microtubule nucleation. May be required for the dynein-mediated transport of pericentriolar proteins to the centrosome. This is BBSome complex member BBS4 (Bbs4) from Mus musculus (Mouse).